Here is a 92-residue protein sequence, read N- to C-terminus: Small ribosomal subunit protein uS19 (92 aa).

This sequence belongs to the universal ribosomal protein uS19 family.

Protein S19 forms a complex with S13 that binds strongly to the 16S ribosomal RNA. The sequence is that of Small ribosomal subunit protein uS19 from Bifidobacterium animalis subsp. lactis (strain AD011).